Consider the following 278-residue polypeptide: 3-methyl-2-oxobutanoate hydroxymethyltransferase (278 aa).

Residues Asp43 and Asp82 each contribute to the Mg(2+) site. 3-methyl-2-oxobutanoate contacts are provided by residues 43–44, Asp82, and Lys112; that span reads DS. Glu114 is a Mg(2+) binding site. Residue Glu181 is the Proton acceptor of the active site.

The protein belongs to the PanB family. As to quaternary structure, homodecamer; pentamer of dimers. It depends on Mg(2+) as a cofactor.

The protein resides in the cytoplasm. It catalyses the reaction 3-methyl-2-oxobutanoate + (6R)-5,10-methylene-5,6,7,8-tetrahydrofolate + H2O = 2-dehydropantoate + (6S)-5,6,7,8-tetrahydrofolate. The protein operates within cofactor biosynthesis; (R)-pantothenate biosynthesis; (R)-pantoate from 3-methyl-2-oxobutanoate: step 1/2. Catalyzes the reversible reaction in which hydroxymethyl group from 5,10-methylenetetrahydrofolate is transferred onto alpha-ketoisovalerate to form ketopantoate. This chain is 3-methyl-2-oxobutanoate hydroxymethyltransferase, found in Bacillus cereus (strain AH187).